Here is a 206-residue protein sequence, read N- to C-terminus: Guanylate kinase (206 aa).

One can recognise a Guanylate kinase-like domain in the interval 5–183 (FNLLILSGPS…SKEIILSIAK (179 aa)). 12-19 (GPSGAGKS) provides a ligand contact to ATP.

It belongs to the guanylate kinase family.

The protein localises to the cytoplasm. The enzyme catalyses GMP + ATP = GDP + ADP. In terms of biological role, essential for recycling GMP and indirectly, cGMP. The chain is Guanylate kinase from Helicobacter pylori (strain HPAG1).